The primary structure comprises 468 residues: Neurexin-1-beta (468 aa).

A signal peptide spans 1–46; that stretch reads MYQRMLRCGAELGSPGGGSSGGAGGRLALLWIVPLTLSGLLGVAWG. Residues 47–391 are Extracellular-facing; that stretch reads ASSLGAHHIH…AEVIRESSST (345 aa). Residues 87–285 form the Laminin G-like domain; it reads YIFSKGGGQI…DANIAIVGNV (199 aa). The Ca(2+) site is built by Asp137 and Val154. Asn184 is a glycosylation site (N-linked (GlcNAc...) asparagine). Residues 201–230 are essential for interaction with CBLN1; modulates interaction affinity with NLGN1, NLGN2 and NLGN3; prevents interaction with DAG1/alpha-dystroglycan; modulates interaction with alpha-latrotoxin; sequence GNNDNERLAIARQRIPYRLGRVVDEWLLDK. The Ca(2+) site is built by Ile236 and Asn238. The O-linked (Xyl...) (heparan sulfate) serine glycan is linked to Ser346. The disordered stretch occupies residues 350 to 381; the sequence is PSDDEDIDPCEPSSGGLANPTRVGGREPYPGS. The helical transmembrane segment at 392–414 threads the bilayer; that stretch reads TGMVVGIVAAAALCILILLYAMY. The Cytoplasmic segment spans residues 415–468; that stretch reads KYRNRDEGSYHVDESRNYISNSAQSNGAVVKEKQPSSAKSANKNKKNKDKEYYV. The disordered stretch occupies residues 435-468; the sequence is NSAQSNGAVVKEKQPSSAKSANKNKKNKDKEYYV. Residues Ser450, Ser451, and Ser454 each carry the phosphoserine modification.

Belongs to the neurexin family. In terms of assembly, the cytoplasmic C-terminal region binds to CASK. Binds NLGN1, NLGN2 and NLGN3, DAG1 (alpha-dystroglycan) and alpha-latrotoxin. Binding to neuroligins is calcium-dependent, and the binding preference ranks as follow: NLGN1 &gt; NLGN4 &gt;&gt; NLGN3 &gt; NLGN2. Interacts with CBLN2 and more weakly with CBLN4. Interacts with CBLN1; interaction is CBLN1 hexamer form-dependent; CBLN1-binding is calcium-independent; isoform 1b does not interact with CBLN1. Interacts with CLSTN3. N-glycosylated. In terms of processing, O-glycosylated; contains heparan sulfate. Heparan sulfate attachment is required for synapse development by mediating interactions with neuroligins. As to expression, brain.

The protein resides in the presynaptic cell membrane. Its function is as follows. Neuronal cell surface protein involved in cell recognition and cell adhesion by forming intracellular junctions through binding to neuroligins. Plays a role in formation of synaptic junctions. Functions as part of a trans-synaptic complex by binding to cerebellins and postsynaptic GRID1. This interaction helps regulate the activity of NMDA and AMPA receptors at hippocampal synapses without affecting synapse formation. NRXN1B-CBLN2-GRID1 complex transduce presynaptic signals into postsynaptic NMDAR response. The polypeptide is Neurexin-1-beta (Rattus norvegicus (Rat)).